Here is a 312-residue protein sequence, read N- to C-terminus: Pseudouridine-5'-phosphate glycosidase (312 aa).

The active-site Proton donor is Glu31. Positions 93 and 113 each coordinate substrate. Residue Asp145 coordinates Mn(2+). Ser147–Asp149 is a substrate binding site. Lys166 serves as the catalytic Nucleophile.

Belongs to the pseudouridine-5'-phosphate glycosidase family. As to quaternary structure, homotrimer. Mn(2+) serves as cofactor. Requires Fe(2+) as cofactor. It depends on Co(2+) as a cofactor.

It catalyses the reaction D-ribose 5-phosphate + uracil = psi-UMP + H2O. With respect to regulation, inhibited by Zn(2+) and Ni(2+). In terms of biological role, catalyzes the reversible cleavage of pseudouridine 5'-phosphate (PsiMP) to ribose 5-phosphate and uracil. Functions biologically in the cleavage direction, as part of a pseudouridine degradation pathway. This is Pseudouridine-5'-phosphate glycosidase from Escherichia coli (strain K12).